The primary structure comprises 440 residues: NADH-quinone oxidoreductase subunit D 1 (440 aa).

It belongs to the complex I 49 kDa subunit family. NDH-1 is composed of 14 different subunits. Subunits NuoB, C, D, E, F, and G constitute the peripheral sector of the complex.

The protein localises to the cell inner membrane. The enzyme catalyses a quinone + NADH + 5 H(+)(in) = a quinol + NAD(+) + 4 H(+)(out). NDH-1 shuttles electrons from NADH, via FMN and iron-sulfur (Fe-S) centers, to quinones in the respiratory chain. The immediate electron acceptor for the enzyme in this species is believed to be a menaquinone. Couples the redox reaction to proton translocation (for every two electrons transferred, four hydrogen ions are translocated across the cytoplasmic membrane), and thus conserves the redox energy in a proton gradient. This is NADH-quinone oxidoreductase subunit D 1 from Chloroherpeton thalassium (strain ATCC 35110 / GB-78).